The primary structure comprises 606 residues: Isocitrate dehydrogenase kinase/phosphatase (606 aa).

Residues 354–360 (APGFKGT) and lysine 375 each bind ATP. Aspartate 414 is a catalytic residue.

The protein belongs to the AceK family.

It localises to the cytoplasm. The enzyme catalyses L-seryl-[isocitrate dehydrogenase] + ATP = O-phospho-L-seryl-[isocitrate dehydrogenase] + ADP + H(+). Its function is as follows. Bifunctional enzyme which can phosphorylate or dephosphorylate isocitrate dehydrogenase (IDH) on a specific serine residue. This is a regulatory mechanism which enables bacteria to bypass the Krebs cycle via the glyoxylate shunt in response to the source of carbon. When bacteria are grown on glucose, IDH is fully active and unphosphorylated, but when grown on acetate or ethanol, the activity of IDH declines drastically concomitant with its phosphorylation. This chain is Isocitrate dehydrogenase kinase/phosphatase, found in Rhodopseudomonas palustris (strain BisB5).